The sequence spans 508 residues: Cobyric acid synthase (508 aa).

Residues 266 to 464 (SLRIAVVAYP…AHGLFESTEV (199 aa)) enclose the GATase cobBQ-type domain. Cysteine 347 serves as the catalytic Nucleophile. Residue histidine 456 is part of the active site.

This sequence belongs to the CobB/CobQ family. CobQ subfamily.

It participates in cofactor biosynthesis; adenosylcobalamin biosynthesis. In terms of biological role, catalyzes amidations at positions B, D, E, and G on adenosylcobyrinic A,C-diamide. NH(2) groups are provided by glutamine, and one molecule of ATP is hydrogenolyzed for each amidation. The chain is Cobyric acid synthase from Methylibium petroleiphilum (strain ATCC BAA-1232 / LMG 22953 / PM1).